The chain runs to 434 residues: Nicotinate phosphoribosyltransferase (434 aa).

His242 bears the Phosphohistidine; by autocatalysis mark.

It belongs to the NAPRTase family. Post-translationally, transiently phosphorylated on a His residue during the reaction cycle. Phosphorylation strongly increases the affinity for substrates and increases the rate of nicotinate D-ribonucleotide production. Dephosphorylation regenerates the low-affinity form of the enzyme, leading to product release.

The catalysed reaction is nicotinate + 5-phospho-alpha-D-ribose 1-diphosphate + ATP + H2O = nicotinate beta-D-ribonucleotide + ADP + phosphate + diphosphate. The protein operates within cofactor biosynthesis; NAD(+) biosynthesis; nicotinate D-ribonucleotide from nicotinate: step 1/1. Functionally, catalyzes the synthesis of beta-nicotinate D-ribonucleotide from nicotinate and 5-phospho-D-ribose 1-phosphate at the expense of ATP. The sequence is that of Nicotinate phosphoribosyltransferase from Mesorhizobium japonicum (strain LMG 29417 / CECT 9101 / MAFF 303099) (Mesorhizobium loti (strain MAFF 303099)).